The chain runs to 736 residues: MNATIKEIALPNKTETFEFGAIAKQANGSVLYRCGKSVLLASVCYESDERVKEDFLPLTVQYIEKSYAAGKFPGGFIKRESKPGDFETLTSRIIDRSLRPLFPKGYAHPTQITVMVLSAQNDADLQTMALNAASAALFVSDIPLRKPVHGLRIGKINGALVVNPTTKEMSESTLDLFVSGVEEDLLMIEMRTLASDEINNTCFVGDCGMVAASASDILKIHQANEMKEEELLEALELAKTSIKKASACYVEAFTPLAKPDAILELKPDITSSEIYQYIKENHAIAIKEAITRMAKSERHSDLKRIAKEIASSERAQESEWSFEAVYETVGKYKREAVRALILEERRRADGRGLKEVRPIDIQTNILPNAHASALFTRGETQALVVATLGGDMDAQSYELLTEKGSSKERFMVHYNFPSFSVGEAGMVGAPGRRELGHGNLAKRALEPTIEEWGAQTIRLVSEILESNGSSSMATVCGGSLALKAAGINTTALVAGVAMGLIVEAEKHAILTDIMGLEDHDGDMDFKIAGTSTGITAMQMDIKLGGLSMEILKEALYQAKEGREHILGIMEKAQSEIIINDEILPSLQIFSINPGRIVDIIGQAGKTIKEIIERFEVAIDLNRDNGEVKVTGSNKQKVEAAKEHILSISNQEAPQRVRVADVYSAGEVFKGKVKKIVDFGAFIELPKGGDGLLHVSKIVQHRDQRIDEVIKEGEEIEVQILSINKNKVELGRATRPN.

Mg(2+) contacts are provided by aspartate 518 and aspartate 524. Residues 584–644 (PSLQIFSINP…QKVEAAKEHI (61 aa)) enclose the KH domain. In terms of domain architecture, S1 motif spans 665–732 (GEVFKGKVKK…NKNKVELGRA (68 aa)).

Belongs to the polyribonucleotide nucleotidyltransferase family. It depends on Mg(2+) as a cofactor.

It localises to the cytoplasm. It carries out the reaction RNA(n+1) + phosphate = RNA(n) + a ribonucleoside 5'-diphosphate. In terms of biological role, involved in mRNA degradation. Catalyzes the phosphorolysis of single-stranded polyribonucleotides processively in the 3'- to 5'-direction. The chain is Polyribonucleotide nucleotidyltransferase from Wolinella succinogenes (strain ATCC 29543 / DSM 1740 / CCUG 13145 / JCM 31913 / LMG 7466 / NCTC 11488 / FDC 602W) (Vibrio succinogenes).